Here is a 168-residue protein sequence, read N- to C-terminus: UPF0114 protein PC1_0431 (168 aa).

3 helical membrane-spanning segments follow: residues 15–35, 53–73, and 136–156; these read LLAP…IKFF, LVLV…LVMV, and LMWY…MGYL.

It belongs to the UPF0114 family.

Its subcellular location is the cell membrane. This chain is UPF0114 protein PC1_0431, found in Pectobacterium carotovorum subsp. carotovorum (strain PC1).